Here is a 287-residue protein sequence, read N- to C-terminus: uncharacterized protein (287 aa).

Catalysis depends on charge relay system residues threonine 43 and tyrosine 104. Residue tyrosine 130 is the Proton donor of the active site. The active-site Schiff-base intermediate with substrate is the lysine 158.

It belongs to the DapA family. As to quaternary structure, homotetramer.

It is found in the cytoplasm. This is an uncharacterized protein from Pyrococcus horikoshii (strain ATCC 700860 / DSM 12428 / JCM 9974 / NBRC 100139 / OT-3).